The following is a 322-amino-acid chain: Acetylglutamate kinase (322 aa).

Substrate contacts are provided by residues glycine 89–glycine 90, arginine 111, and asparagine 217.

It belongs to the acetylglutamate kinase family. ArgB subfamily.

It localises to the cytoplasm. The enzyme catalyses N-acetyl-L-glutamate + ATP = N-acetyl-L-glutamyl 5-phosphate + ADP. It participates in amino-acid biosynthesis; L-arginine biosynthesis; N(2)-acetyl-L-ornithine from L-glutamate: step 2/4. Catalyzes the ATP-dependent phosphorylation of N-acetyl-L-glutamate. The protein is Acetylglutamate kinase of Ehrlichia ruminantium (strain Welgevonden).